Consider the following 1252-residue polypeptide: Guanine nucleotide exchange factor SDC25 (1252 aa).

The SH3 domain occupies 26–97 (QPIDVVECTY…PPSFTRSILN (72 aa)). Disordered regions lie at residues 409–454 (IPAS…DTIW) and 623–648 (LNLDNAKDKKNGSQNTDIQEEEDEYE). The span at 416–428 (TSCSSETSHHSPS) shows a compositional bias: low complexity. The N-terminal Ras-GEF domain maps to 782–914 (SNNRIKGGSK…LLKEVNQKFK (133 aa)). The 248-residue stretch at 952–1199 (DPVLFATQLT…YQLSLIIEPK (248 aa)) folds into the Ras-GEF domain. The tract at residues 1201-1252 (RKKVVPNSNSNNKSQEKSRDDQTDEGKTSTKKDRFSKFQLHKTKKKAPKVSK) is disordered. A compositionally biased stretch (basic and acidic residues) spans 1214 to 1236 (SQEKSRDDQTDEGKTSTKKDRFS). The segment covering 1239–1252 (QLHKTKKKAPKVSK) has biased composition (basic residues).

Its function is as follows. Promotes the exchange of Ras-bound GDP by GTP. The sequence is that of Guanine nucleotide exchange factor SDC25 (SDC25) from Saccharomyces cerevisiae (strain YJM789) (Baker's yeast).